The chain runs to 266 residues: Aliphatic sulfonates import ATP-binding protein SsuB (266 aa).

The ABC transporter domain occupies 23-244; it reads LALDAITKHY…RRGSAKLAEL (222 aa). 55 to 62 lines the ATP pocket; sequence GRSGCGKS.

Belongs to the ABC transporter superfamily. Aliphatic sulfonates importer (TC 3.A.1.17.2) family. In terms of assembly, the complex is composed of two ATP-binding proteins (SsuB), two transmembrane proteins (SsuC) and a solute-binding protein (SsuA).

It localises to the cell inner membrane. The enzyme catalyses ATP + H2O + aliphatic sulfonate-[sulfonate-binding protein]Side 1 = ADP + phosphate + aliphatic sulfonateSide 2 + [sulfonate-binding protein]Side 1.. Functionally, part of the ABC transporter complex SsuABC involved in aliphatic sulfonates import. Responsible for energy coupling to the transport system. The polypeptide is Aliphatic sulfonates import ATP-binding protein SsuB (Pectobacterium atrosepticum (strain SCRI 1043 / ATCC BAA-672) (Erwinia carotovora subsp. atroseptica)).